Reading from the N-terminus, the 814-residue chain is Spore development regulator umv1 (814 aa).

Disordered stretches follow at residues 1 to 36 (MSRP…GSTE), 96 to 134 (HDRP…VRRG), 267 to 333 (QGLK…MPRS), 407 to 441 (PPRD…RAGP), 457 to 501 (PVRS…ASLT), and 539 to 814 (QSSG…NQPY). The span at 7–18 (RSGNASTPQGTS) shows a compositional bias: polar residues. The region spanning 53–274 (RDHIEYQLTV…AEQGLKVRVR (222 aa)) is the Velvet domain. The segment covering 271 to 285 (VRVRKHPRSRRRGSK) has biased composition (basic residues). A compositionally biased stretch (basic and acidic residues) spans 407 to 423 (PPRDFADGRYMDGDYPP). Positions 438–445 (RAGPSEYS) match the Nuclear localization signal motif. A compositionally biased stretch (low complexity) spans 620–631 (AAARRSPIPSAR). Basic and acidic residues-rich tracts occupy residues 723 to 741 (TRDR…DRDQ) and 760 to 796 (GELD…RRDF). Residues 800 to 814 (TMPSKPSSRGHNQPY) are compositionally biased toward polar residues.

Belongs to the velvet family. VosA subfamily. In terms of assembly, forms a heterodimeric complex with velB; the formation of the VEL2-VOS1 complex is light-dependent.

It is found in the nucleus. In terms of biological role, component of the velB-VosA heterodimeric complex that plays a dual role in activating genes associated with spore maturation and repressing certain development-associated genes. The complex binds DNA through the DNA-binding domain of vosA that recognizes an 11-nucleotide consensus sequence 5'-CTGGCCGCGGC-3' consisting of two motifs in the promoters of key developmental regulatory genes. Required for gall induction and teliospore formation on seedlings. This chain is Spore development regulator umv1, found in Mycosarcoma maydis (Corn smut fungus).